Reading from the N-terminus, the 327-residue chain is MIEIKDKQLTGLRFIDLFAGLGGFRLALESCGAECVYSNEWDKYAQEVYEMNFGEKPEGDITQVNEKTIPDHDILCAGFPCQAFSISGKQKGFEDSRGTLFFDIARIVREKKPKVVFMENVKNFASHDNGNTLEVVKNTMNELDYSFHAKVLNALDYGIPQKRERIYMICFRNDLNIQNFQFPKPFELNTFVKDLLLPDSEVEHLVIDRKDLVMTNQEIEQTTPKTVRLGIVGKGGQGERIYSTRGIAITLSAYGGGIFAKTGGYLVNGKTRKLHPRECARVMGYPDSYKVHPSTSQAYKQFGNSVVINVLQYIAYNIGSSLNFKPY.

Residues 12–325 (LRFIDLFAGL…YNIGSSLNFK (314 aa)) enclose the SAM-dependent MTase C5-type domain. The active site involves C81.

The protein belongs to the class I-like SAM-binding methyltransferase superfamily. C5-methyltransferase family. In terms of assembly, monomer.

The catalysed reaction is a 2'-deoxycytidine in DNA + S-adenosyl-L-methionine = a 5-methyl-2'-deoxycytidine in DNA + S-adenosyl-L-homocysteine + H(+). A methylase, recognizes the double-stranded sequence 5'-GCGC-3', methylates C-2 on both strands, and protects the DNA from cleavage by the HhaI endonuclease. This is Type II methyltransferase M.HhaI (hhaIM) from Haemophilus parahaemolyticus.